Consider the following 160-residue polypeptide: MLKKRKTTVYALGQYLSMSAHKARRVIDQIRGRSYEETLMILELMPYRACYPIFKLVYSAAANASYNMDSNESNLVISKAEVSEGTIVKKLKPRARGRSFPIKRPTCHISIVVKDISLDEYIEVDFLDPLRWSKKLKSKKKYTAMAYHNMYSNGGVWDKK.

It belongs to the universal ribosomal protein uL22 family. In terms of assembly, part of the 50S ribosomal subunit.

It is found in the plastid. The protein localises to the chloroplast. This protein binds specifically to 23S rRNA. Functionally, the globular domain of the protein is located near the polypeptide exit tunnel on the outside of the subunit, while an extended beta-hairpin is found that lines the wall of the exit tunnel in the center of the 70S ribosome. This is Large ribosomal subunit protein uL22c (rpl22) from Panax ginseng (Korean ginseng).